We begin with the raw amino-acid sequence, 83 residues long: Type 3 secretion system needle filament protein (83 aa).

It belongs to the SctF family. In terms of assembly, the core secretion machinery of the T3SS is composed of approximately 20 different proteins, including cytoplasmic components, a base, an export apparatus and a needle. This subunit polymerizes and forms the helical needle filament. Interacts with the needle tip protein IpaD/SctA. Interacts with the export apparatus components SpaP/SctR, SpaQ/SctS and SpaR/SctT.

The protein resides in the secreted. Its subcellular location is the cell surface. Functionally, component of the type III secretion system (T3SS), also called injectisome, which is used to inject bacterial effector proteins into eukaryotic host cells. MxiH/SctF forms the external needle filament that protrudes from the bacterial surface. During infection, can induce innate immune responses. The needle proteins interact with host TLR2 or TLR4, and induce signaling by NF-kappa-B and/or AP-1. This activation is MyD88 dependent and results in increased expression of cytokines, including TNF-alpha, IL-6 and IL-8. In Shigella flexneri, this protein is Type 3 secretion system needle filament protein.